The following is a 396-amino-acid chain: Fumarate--(S)-2,3-diaminopropanoate ligase (396 aa).

The enzyme catalyses (S)-2,3-diaminopropanoate + fumarate + ATP = N(3)-fumaroyl-(S)-2,3-diaminopropanoate + AMP + diphosphate. The protein operates within antibiotic biosynthesis. Its function is as follows. Involved in dapdiamide antibiotics biosynthesis. Ligates fumarate and 2,3-diaminopropionate (DAP) to form N-beta-fumaroyl-DAP. Can also form N-succinoyl-DAP from succinate and DAP, with lower efficiency. In Enterobacter agglomerans (Erwinia herbicola), this protein is Fumarate--(S)-2,3-diaminopropanoate ligase.